The sequence spans 259 residues: Ribosome maturation factor RimP (259 aa).

A disordered region spans residues 198 to 259 (SLGLAPEPPP…RGEIDTSEGD (62 aa)). Over residues 243-253 (LAADKARRGEI) the composition is skewed to basic and acidic residues.

The protein belongs to the RimP family.

It localises to the cytoplasm. Required for maturation of 30S ribosomal subunits. This chain is Ribosome maturation factor RimP, found in Rhodopseudomonas palustris (strain TIE-1).